The chain runs to 315 residues: Type II restriction enzyme AvaI (315 aa).

The catalysed reaction is Endonucleolytic cleavage of DNA to give specific double-stranded fragments with terminal 5'-phosphates.. Functionally, a P subtype restriction enzyme that recognizes the double-stranded sequence 5'-CYCGRG-3' and cleaves after C-1. This chain is Type II restriction enzyme AvaI, found in Anabaena variabilis.